The following is a 424-amino-acid chain: Histidinol dehydrogenase (424 aa).

3 residues coordinate NAD(+): Tyr121, Gln183, and Asn206. Substrate-binding residues include Ser229, Gln251, and His254. Zn(2+) contacts are provided by Gln251 and His254. Catalysis depends on proton acceptor residues Glu319 and His320. The substrate site is built by His320, Asp353, Glu407, and His412. Asp353 contributes to the Zn(2+) binding site. Residue His412 coordinates Zn(2+).

Belongs to the histidinol dehydrogenase family. It depends on Zn(2+) as a cofactor.

The enzyme catalyses L-histidinol + 2 NAD(+) + H2O = L-histidine + 2 NADH + 3 H(+). It participates in amino-acid biosynthesis; L-histidine biosynthesis; L-histidine from 5-phospho-alpha-D-ribose 1-diphosphate: step 9/9. Functionally, catalyzes the sequential NAD-dependent oxidations of L-histidinol to L-histidinaldehyde and then to L-histidine. The chain is Histidinol dehydrogenase from Halalkalibacterium halodurans (strain ATCC BAA-125 / DSM 18197 / FERM 7344 / JCM 9153 / C-125) (Bacillus halodurans).